We begin with the raw amino-acid sequence, 59 residues long: Small ribosomal subunit protein bS21 (59 aa).

The interval 40-59 (KPSVKRKKKSEAARKRKSFR) is disordered. Over residues 43–59 (VKRKKKSEAARKRKSFR) the composition is skewed to basic residues.

This sequence belongs to the bacterial ribosomal protein bS21 family.

The chain is Small ribosomal subunit protein bS21 from Desulforamulus reducens (strain ATCC BAA-1160 / DSM 100696 / MI-1) (Desulfotomaculum reducens).